A 432-amino-acid polypeptide reads, in one-letter code: Glutamate-1-semialdehyde 2,1-aminomutase (432 aa).

Position 272 is an N6-(pyridoxal phosphate)lysine (Lys-272).

The protein belongs to the class-III pyridoxal-phosphate-dependent aminotransferase family. HemL subfamily. In terms of assembly, homodimer. Pyridoxal 5'-phosphate is required as a cofactor.

It localises to the cytoplasm. It catalyses the reaction (S)-4-amino-5-oxopentanoate = 5-aminolevulinate. Its pathway is porphyrin-containing compound metabolism; protoporphyrin-IX biosynthesis; 5-aminolevulinate from L-glutamyl-tRNA(Glu): step 2/2. It participates in porphyrin-containing compound metabolism; chlorophyll biosynthesis. In Nostoc sp. (strain PCC 7120 / SAG 25.82 / UTEX 2576), this protein is Glutamate-1-semialdehyde 2,1-aminomutase.